Reading from the N-terminus, the 338-residue chain is UDP-N-acetylenolpyruvoylglucosamine reductase (338 aa).

The FAD-binding PCMH-type domain occupies 17 to 188 (IAARTDWWID…MYVDYRLRLR (172 aa)). R164 is an active-site residue. Catalysis depends on S237, which acts as the Proton donor. E333 is a catalytic residue.

This sequence belongs to the MurB family. It depends on FAD as a cofactor.

Its subcellular location is the cytoplasm. It carries out the reaction UDP-N-acetyl-alpha-D-muramate + NADP(+) = UDP-N-acetyl-3-O-(1-carboxyvinyl)-alpha-D-glucosamine + NADPH + H(+). It functions in the pathway cell wall biogenesis; peptidoglycan biosynthesis. Its function is as follows. Cell wall formation. The chain is UDP-N-acetylenolpyruvoylglucosamine reductase from Porphyromonas gingivalis (strain ATCC 33277 / DSM 20709 / CIP 103683 / JCM 12257 / NCTC 11834 / 2561).